Here is a 729-residue protein sequence, read N- to C-terminus: Solute carrier family 15 member 2 (729 aa).

Positions 1-34 are disordered; the sequence is MNPFQKNESKETLFSPVSTEEMLPGPPSPPKKST. Residues 1-57 are Cytoplasmic-facing; it reads MNPFQKNESKETLFSPVSTEEMLPGPPSPPKKSTPKLFGSSYPLSIAFIVVNEFCER. Serine 9 carries the phosphoserine modification. Phosphothreonine is present on threonine 12. Serine 28 carries the post-translational modification Phosphoserine. The helical transmembrane segment at 58-78 threads the bilayer; the sequence is FSYYGMKAVLTLYFLYFLHWN. The Extracellular portion of the chain corresponds to 79-87; sequence EDTSTSVYH. Residues 88–108 form a helical membrane-spanning segment; the sequence is AFSSLCYFTPILGAAIADSWL. Topologically, residues 109–113 are cytoplasmic; it reads GKFKT. A helical membrane pass occupies residues 114 to 134; sequence IIYLSLVYVLGHVFKSLGAIP. The Extracellular portion of the chain corresponds to 135–139; it reads ILGGK. A helical membrane pass occupies residues 140–160; that stretch reads MLHTILSLVGLSLIALGTGGI. Over 161-183 the chain is Cytoplasmic; it reads KPCVAAFGGDQFEEEHAEARTRY. A helical transmembrane segment spans residues 184–204; it reads FSVFYLSINAGSLISTFITPM. Topologically, residues 205-217 are extracellular; that stretch reads LRGDVKCFGEDCY. A helical transmembrane segment spans residues 218–238; it reads ALAFGIPGLLMVLALVVFAMG. Topologically, residues 239-295 are cytoplasmic; sequence SKMYRKPPPEGNIVAQVTKCIWFAICNRFRNRSEDIPKRQHWLDWAAEKYPKHLIMD. A helical membrane pass occupies residues 296–316; the sequence is VKALTRILFLYIPLPMFWALL. The Extracellular portion of the chain corresponds to 317–343; it reads DQQGSRWTLQANKMDGDLGFFVLQPDQ. The helical transmembrane segment at 344 to 364 threads the bilayer; the sequence is MQVLNPFLVLVFIPLFDLVIY. Topologically, residues 365–380 are cytoplasmic; that stretch reads RLISKCGVNFSSLRKM. Residues 381-401 form a helical membrane-spanning segment; that stretch reads AVGMILACLAFAVAALVEIKI. At 402 to 611 the chain is on the extracellular side; it reads NGMIHPQPAS…PANKLSIAWQ (210 aa). The tract at residues 402–611 is extracellular domain (ECD); it reads NGMIHPQPAS…PANKLSIAWQ (210 aa). N-linked (GlcNAc...) asparagine glycans are attached at residues asparagine 448, asparagine 472, asparagine 528, and asparagine 587. The helical transmembrane segment at 612-632 threads the bilayer; that stretch reads LPQYVLVTAAEVMFSVTGLEF. Over 633–643 the chain is Cytoplasmic; the sequence is SYSQAPSSMKS. The chain crosses the membrane as a helical span at residues 644 to 664; sequence VLQAAWLLTVAVGNIIVLIVA. Residues 665 to 674 are Extracellular-facing; it reads QFSGLVQWAE. A helical membrane pass occupies residues 675-695; the sequence is FVLFSCLLLVVCLIFSVMGYY. Topologically, residues 696-729 are cytoplasmic; sequence YVPLKSEGIHEATEKQIPHIQGNMINLETKNTRL.

Belongs to the major facilitator superfamily. Proton-dependent oligopeptide transporter (POT/PTR) (TC 2.A.17) family. Interacts (via extracellular domain region) with trypsin. As to expression, expressed in kidney brush border cells (at protein level). Highly expressed in macrophages.

It localises to the apical cell membrane. The protein localises to the cytoplasmic vesicle. The protein resides in the phagosome membrane. Its subcellular location is the cell membrane. It carries out the reaction N-acetyl-D-muramoyl-L-alanyl-D-isoglutamine(out) + 3 H(+)(out) = N-acetyl-D-muramoyl-L-alanyl-D-isoglutamine(in) + 3 H(+)(in). It catalyses the reaction a dipeptide(out) + 2 H(+)(out) = a dipeptide(in) + 2 H(+)(in). The enzyme catalyses glycyl-L-leucine(out) + 2 H(+)(out) = glycyl-L-leucine(in) + 2 H(+)(in). The catalysed reaction is glycyl-L-lysine(out) + 2 H(+)(out) = glycyl-L-lysine(in) + 2 H(+)(in). It carries out the reaction glycyl-L-glutamate(out) + 3 H(+)(out) = glycyl-L-glutamate(in) + 3 H(+)(in). It catalyses the reaction L-alanyl-L-alanine(out) + 2 H(+)(out) = L-alanyl-L-alanine(in) + 2 H(+)(in). The enzyme catalyses an L-amino acid tripeptide(out) + 2 H(+)(out) = an L-amino acid tripeptide(in) + 2 H(+)(in). The catalysed reaction is carnosine(out) + 2 H(+)(out) = carnosine(in) + 2 H(+)(in). Functionally, proton-coupled amino-acid transporter that transports oligopeptides of 2 to 4 amino acids with a preference for dipeptides. Transports neutral and anionic dipeptides with a proton to peptide stoichiometry of 2:1 or 3:1. In kidney, involved in the absorption of circulating di- and tripeptides from the glomerular filtrate. Can also transport beta-lactam antibiotics, such as the aminocephalosporin cefadroxil, and other antiviral and anticancer drugs. Transports the dipeptide-like aminopeptidase inhibitor bestatin. Also able to transport carnosine. Involved in innate immunity by promoting the detection of microbial pathogens by NOD-like receptors (NLRs). Mediates transport of bacterial peptidoglycans across the plasma membrane or, in macrophages, the phagosome membrane: catalyzes the transport of certain bacterial peptidoglycans, such as muramyl dipeptide (MDP), the NOD2 ligand. In Mus musculus (Mouse), this protein is Solute carrier family 15 member 2.